Reading from the N-terminus, the 65-residue chain is Small ribosomal subunit protein bS21 (65 aa).

Residues arginine 33 to serine 42 show a composition bias toward basic and acidic residues. Residues arginine 33–asparagine 65 form a disordered region. The segment covering valine 43–lysine 58 has biased composition (basic residues).

This sequence belongs to the bacterial ribosomal protein bS21 family.

The protein is Small ribosomal subunit protein bS21 of Herpetosiphon aurantiacus (strain ATCC 23779 / DSM 785 / 114-95).